The sequence spans 444 residues: Chromosomal replication initiator protein DnaA (444 aa).

Positions Met-1–Tyr-73 are domain I, interacts with DnaA modulators. The segment at Tyr-73 to Asn-104 is domain II. Positions Gln-105 to Ile-321 are domain III, AAA+ region. Residues Gly-149, Gly-151, Lys-152, and Thr-153 each contribute to the ATP site. Residues Ser-322 to Gln-444 form a domain IV, binds dsDNA region.

The protein belongs to the DnaA family. As to quaternary structure, oligomerizes as a right-handed, spiral filament on DNA at oriC.

Its subcellular location is the cytoplasm. In terms of biological role, plays an essential role in the initiation and regulation of chromosomal replication. ATP-DnaA binds to the origin of replication (oriC) to initiate formation of the DNA replication initiation complex once per cell cycle. Binds the DnaA box (a 9 base pair repeat at the origin) and separates the double-stranded (ds)DNA. Forms a right-handed helical filament on oriC DNA; dsDNA binds to the exterior of the filament while single-stranded (ss)DNA is stabiized in the filament's interior. The ATP-DnaA-oriC complex binds and stabilizes one strand of the AT-rich DNA unwinding element (DUE), permitting loading of DNA polymerase. After initiation quickly degrades to an ADP-DnaA complex that is not apt for DNA replication. Binds acidic phospholipids. The sequence is that of Chromosomal replication initiator protein DnaA from Microcystis aeruginosa (strain NIES-843 / IAM M-2473).